We begin with the raw amino-acid sequence, 213 residues long: MNADTWTRLQAFRHALELTSCEASLTAGYDHLKDFPAGCSELASQTLTDYLTEDGSNLYSCIVGMQWDNGPGRYGHVIADPARDYIDLTLDQFPGYHNRIVAEPVESGGQLAADLNREPAISTADGIVASPSDKVNYITEQKNRQPMVIITECYKLIRMTARFIPMCQSSQLFQHQVFPRLFIISDVGSCSLFRNTLDRLATDWKVTLSILSL.

This is an uncharacterized protein from Escherichia coli (strain UTI89 / UPEC).